Here is a 386-residue protein sequence, read N- to C-terminus: Patatin-07 (386 aa).

The signal sequence occupies residues 1 to 23; the sequence is MATTKSFLILFFMILATTSSTCA. Residues 32-229 enclose the PNPLA domain; it reads LSIDGGGIKG…TVADPALLSV (198 aa). The short motif at 36–41 is the GXGXXG element; sequence GGGIKG. Positions 75–79 match the GXSXG motif; it reads GTSTG. Residue serine 77 is the Nucleophile of the active site. Residues asparagine 115 and asparagine 202 are each glycosylated (N-linked (GlcNAc...) asparagine). Aspartate 215 serves as the catalytic Proton acceptor. The short motif at 215–217 is the DGA/G element; it reads DGA.

It belongs to the patatin family. As to expression, tuber.

The protein localises to the vacuole. Functionally, probable lipolytic acyl hydrolase (LAH), an activity which is thought to be involved in the response of tubers to pathogens. This Solanum tuberosum (Potato) protein is Patatin-07.